Consider the following 124-residue polypeptide: S-adenosylmethionine decarboxylase proenzyme (124 aa).

The active-site Schiff-base intermediate with substrate; via pyruvic acid is Ser-63. Ser-63 bears the Pyruvic acid (Ser); by autocatalysis mark. His-68 functions as the Proton acceptor; for processing activity in the catalytic mechanism. The active-site Proton donor; for catalytic activity is Cys-83.

It belongs to the prokaryotic AdoMetDC family. Type 1 subfamily. In terms of assembly, heterotetramer of two alpha and two beta chains arranged as a dimer of alpha/beta heterodimers. Requires pyruvate as cofactor. Is synthesized initially as an inactive proenzyme. Formation of the active enzyme involves a self-maturation process in which the active site pyruvoyl group is generated from an internal serine residue via an autocatalytic post-translational modification. Two non-identical subunits are generated from the proenzyme in this reaction, and the pyruvate is formed at the N-terminus of the alpha chain, which is derived from the carboxyl end of the proenzyme. The post-translation cleavage follows an unusual pathway, termed non-hydrolytic serinolysis, in which the side chain hydroxyl group of the serine supplies its oxygen atom to form the C-terminus of the beta chain, while the remainder of the serine residue undergoes an oxidative deamination to produce ammonia and the pyruvoyl group blocking the N-terminus of the alpha chain.

The enzyme catalyses S-adenosyl-L-methionine + H(+) = S-adenosyl 3-(methylsulfanyl)propylamine + CO2. Its pathway is amine and polyamine biosynthesis; S-adenosylmethioninamine biosynthesis; S-adenosylmethioninamine from S-adenosyl-L-methionine: step 1/1. In terms of biological role, catalyzes the decarboxylation of S-adenosylmethionine to S-adenosylmethioninamine (dcAdoMet), the propylamine donor required for the synthesis of the polyamines spermine and spermidine from the diamine putrescine. This chain is S-adenosylmethionine decarboxylase proenzyme, found in Caldicellulosiruptor bescii (strain ATCC BAA-1888 / DSM 6725 / KCTC 15123 / Z-1320) (Anaerocellum thermophilum).